A 196-amino-acid chain; its full sequence is Small ribosomal subunit protein uS4c (196 aa).

A disordered region spans residues leucine 15–glutamine 43. The 62-residue stretch at methionine 89–asparagine 150 folds into the S4 RNA-binding domain.

It belongs to the universal ribosomal protein uS4 family. Part of the 30S ribosomal subunit. Contacts protein S5. The interaction surface between S4 and S5 is involved in control of translational fidelity.

The protein localises to the plastid. Its subcellular location is the chloroplast. One of the primary rRNA binding proteins, it binds directly to 16S rRNA where it nucleates assembly of the body of the 30S subunit. Its function is as follows. With S5 and S12 plays an important role in translational accuracy. In Melinis repens (Red Natal grass), this protein is Small ribosomal subunit protein uS4c (rps4).